A 257-amino-acid chain; its full sequence is uncharacterized protein (257 aa).

This is an uncharacterized protein from Dictyostelium discoideum (Social amoeba).